We begin with the raw amino-acid sequence, 51 residues long: Non-specific lipid-transfer protein (51 aa).

This sequence belongs to the plant LTP family.

In terms of biological role, plant non-specific lipid-transfer proteins transfer phospholipids as well as galactolipids across membranes. May play a role in wax or cutin deposition in the cell walls of expanding epidermal cells and certain secretory tissues. This chain is Non-specific lipid-transfer protein, found in Lycium barbarum (Barbary matrimony-vine).